A 245-amino-acid chain; its full sequence is Probable phosphatase YcdX (245 aa).

9 residues coordinate Zn(2+): histidine 7, histidine 9, histidine 15, histidine 40, glutamate 73, histidine 101, histidine 131, aspartate 192, and histidine 194.

It belongs to the PHP family. In terms of assembly, homotrimer. Zn(2+) serves as cofactor.

This is Probable phosphatase YcdX from Salmonella agona (strain SL483).